A 31-amino-acid chain; its full sequence is Conserved oligomeric Golgi complex subunit 5 (31 aa).

This sequence belongs to the COG5 family. As to quaternary structure, component of the conserved oligomeric Golgi complex which is composed of eight different subunits and is required for normal Golgi morphology and localization.

The protein localises to the cytoplasm. Its subcellular location is the cytosol. It is found in the golgi apparatus membrane. In terms of biological role, required for normal Golgi function. The polypeptide is Conserved oligomeric Golgi complex subunit 5 (COG5) (Bos taurus (Bovine)).